Consider the following 310-residue polypeptide: Aminoacyl tRNA synthase complex-interacting multifunctional protein 1 (310 aa).

Alanine 2 bears the N-acetylalanine mark. Residues 6–46 (AVLKRLEQKGAEADQIIEYLKQQVALLKEKAILQATMREEK) are required for fibroblast proliferation. The tract at residues 54-192 (KLKKEIEELK…APRTVVSGLV (139 aa)) is interaction with HSP90B1. Over residues 92-110 (ASESVVQSPSVATTASPAT) the composition is skewed to polar residues. Residues 92–147 (ASESVVQSPSVATTASPATKEQIKAGEEKKVKEKTEKKGEKKEKQQSAAASTDSKP) form a disordered region. Residues 101-115 (SVATTASPATKEQIK) form a required for endothelial cell death region. A compositionally biased stretch (basic and acidic residues) spans 112–136 (EQIKAGEEKKVKEKTEKKGEKKEKQ). Residues 115–190 (KAGEEKKVKE…EAAPRTVVSG (76 aa)) are required for endothelial cell migration. At serine 138 the chain carries Phosphoserine. The 102-residue stretch at 149–250 (DASRLDLRIG…NGSVPGDRIT (102 aa)) folds into the tRNA-binding domain. N6-succinyllysine is present on lysine 267.

As to quaternary structure, homodimer. Part of the multisynthetase complex (MSC), a multisubunit complex that groups tRNA ligases for Arg (RARS1), Asp (DARS1), Gln (QARS1), Ile (IARS1), Leu (LARS1), Lys (KARS1), Met (MARS1) the bifunctional ligase for Glu and Pro (EPRS1) and the auxiliary subunits AIMP1/p43, AIMP2/p38 and EEF1E1/p18. Interacts (via N-terminus) with RARS1 (via N-terminus). Part of a complex composed of RARS1, QARS1 and AIMP1. Interacts (via C-terminus) with SMURF2. Interacts (via N-terminus) with HSP90B1/gp96 (via C-terminus). Interacts with PSMA7. Interacts with TARS3. In terms of processing, cleaved by caspase-7 in response to apoptosis to produce EMAP-II. As to expression, highly expressed in salivary glands and pancreatic alpha cells in the adult (at protein level). In the embryo, expressed primarily at sites of tissue remodeling such as ganglia, developing bones and teeth.

It is found in the nucleus. Its subcellular location is the cytoplasm. It localises to the cytosol. The protein localises to the secreted. The protein resides in the endoplasmic reticulum. It is found in the golgi apparatus. Its function is as follows. Non-catalytic component of the multisynthase complex. Stimulates the catalytic activity of cytoplasmic arginyl-tRNA synthase. Binds tRNA. Possesses inflammatory cytokine activity. Negatively regulates TGF-beta signaling through stabilization of SMURF2 by binding to SMURF2 and inhibiting its SMAD7-mediated degradation. Involved in glucose homeostasis through induction of glucagon secretion at low glucose levels. Promotes dermal fibroblast proliferation and wound repair. Regulates KDELR1-mediated retention of HSP90B1/gp96 in the endoplasmic reticulum. Plays a role in angiogenesis by inducing endothelial cell migration at low concentrations and endothelian cell apoptosis at high concentrations. Induces maturation of dendritic cells and monocyte cell adhesion. Modulates endothelial cell responses by degrading HIF-1A through interaction with PSMA7. In Mus musculus (Mouse), this protein is Aminoacyl tRNA synthase complex-interacting multifunctional protein 1 (Aimp1).